The chain runs to 692 residues: Elongation factor G (692 aa).

The tr-type G domain maps to Lys-8–Leu-282. Residues Ala-17–Thr-24, Asp-81–His-85, and Asn-135–Asp-138 each bind GTP.

Belongs to the TRAFAC class translation factor GTPase superfamily. Classic translation factor GTPase family. EF-G/EF-2 subfamily.

The protein localises to the cytoplasm. Functionally, catalyzes the GTP-dependent ribosomal translocation step during translation elongation. During this step, the ribosome changes from the pre-translocational (PRE) to the post-translocational (POST) state as the newly formed A-site-bound peptidyl-tRNA and P-site-bound deacylated tRNA move to the P and E sites, respectively. Catalyzes the coordinated movement of the two tRNA molecules, the mRNA and conformational changes in the ribosome. This is Elongation factor G from Shouchella clausii (strain KSM-K16) (Alkalihalobacillus clausii).